The following is a 253-amino-acid chain: MPTSDSGEPRRIAMKPNGVTVPISDQQEQLPCPRCDSSNTKFCYYNNYNFSQPRHFCKACRRYWTHGGTLRDVPVGGGTRKSAKRSRTCSNSSSSSVSGVVSNSNGVPLQTTPVLFPQSSISNGVTHTVTESDGKGSALSLCGSFTSTLLNHNAAATATHGSGSVIGIGGFGIGLGSGFDDVSFGLGRAMWPFSTVGTATTTNVGSNGGHHAVPMPATWQFEGLESNAGGGFVSGEYFAWPDLSITTPGNSLK.

The Dof-type zinc finger occupies leucine 30 to lysine 84. 4 residues coordinate Zn(2+): cysteine 32, cysteine 35, cysteine 57, and cysteine 60. Residues valine 73–asparagine 103 form a disordered region. The span at serine 90–asparagine 103 shows a compositional bias: low complexity.

Interacts with OBF4 or OBF5. In terms of tissue distribution, constitutively expressed in the whole plant.

The protein resides in the nucleus. Functionally, transcription factor that binds specifically to a 5'-AA[AG]G-3' consensus core sequence. Enhances the DNA binding of OBF transcription factors to OCS elements. The sequence is that of Dof zinc finger protein DOF3.4 (DOF3.4) from Arabidopsis thaliana (Mouse-ear cress).